The sequence spans 267 residues: Putative F-box protein At1g61060 (267 aa).

Residues 15–63 (DYFDAIHVDLFTAKILSKLPVKSIAQCRCVSKLWSSQIRRPYYNMLFPI) enclose the F-box domain.

This chain is Putative F-box protein At1g61060, found in Arabidopsis thaliana (Mouse-ear cress).